The sequence spans 158 residues: MAKEQGRKLIAQNRRARHDWSVLDTYETGIVLTGTEVKSLRQGKASLVDGFATVDRGEVWLRNVHIPEYTEGTWTNHEPRRSRKLLLHKGEIIRLIGKIQESGLSLIPLSLYFSDGKAKVELALAKGKKAHDKRQDLAKKDAQREIERAMGRARKGKW.

This sequence belongs to the SmpB family.

The protein localises to the cytoplasm. Functionally, required for rescue of stalled ribosomes mediated by trans-translation. Binds to transfer-messenger RNA (tmRNA), required for stable association of tmRNA with ribosomes. tmRNA and SmpB together mimic tRNA shape, replacing the anticodon stem-loop with SmpB. tmRNA is encoded by the ssrA gene; the 2 termini fold to resemble tRNA(Ala) and it encodes a 'tag peptide', a short internal open reading frame. During trans-translation Ala-aminoacylated tmRNA acts like a tRNA, entering the A-site of stalled ribosomes, displacing the stalled mRNA. The ribosome then switches to translate the ORF on the tmRNA; the nascent peptide is terminated with the 'tag peptide' encoded by the tmRNA and targeted for degradation. The ribosome is freed to recommence translation, which seems to be the essential function of trans-translation. This Saccharopolyspora erythraea (strain ATCC 11635 / DSM 40517 / JCM 4748 / NBRC 13426 / NCIMB 8594 / NRRL 2338) protein is SsrA-binding protein.